A 139-amino-acid chain; its full sequence is 6,7-dimethyl-8-ribityllumazine synthase (139 aa).

5-amino-6-(D-ribitylamino)uracil is bound by residues Phe-13, 45 to 47 (VFD), and 69 to 71 (AVI). Residue 74–75 (AT) coordinates (2S)-2-hydroxy-3-oxobutyl phosphate. The active-site Proton donor is the His-77. Leu-102 lines the 5-amino-6-(D-ribitylamino)uracil pocket. Arg-117 lines the (2S)-2-hydroxy-3-oxobutyl phosphate pocket.

Belongs to the DMRL synthase family.

It carries out the reaction (2S)-2-hydroxy-3-oxobutyl phosphate + 5-amino-6-(D-ribitylamino)uracil = 6,7-dimethyl-8-(1-D-ribityl)lumazine + phosphate + 2 H2O + H(+). Its pathway is cofactor biosynthesis; riboflavin biosynthesis; riboflavin from 2-hydroxy-3-oxobutyl phosphate and 5-amino-6-(D-ribitylamino)uracil: step 1/2. In terms of biological role, catalyzes the formation of 6,7-dimethyl-8-ribityllumazine by condensation of 5-amino-6-(D-ribitylamino)uracil with 3,4-dihydroxy-2-butanone 4-phosphate. This is the penultimate step in the biosynthesis of riboflavin. The polypeptide is 6,7-dimethyl-8-ribityllumazine synthase (Methanothermobacter thermautotrophicus (strain ATCC 29096 / DSM 1053 / JCM 10044 / NBRC 100330 / Delta H) (Methanobacterium thermoautotrophicum)).